The following is a 505-amino-acid chain: Deoxyguanosinetriphosphate triphosphohydrolase (505 aa).

Residues 66–273 (RLTHSMEVQQ…MEAADDISYC (208 aa)) form the HD domain.

It belongs to the dGTPase family. Type 1 subfamily. Homotetramer. The cofactor is Mg(2+).

The catalysed reaction is dGTP + H2O = 2'-deoxyguanosine + triphosphate + H(+). In terms of biological role, dGTPase preferentially hydrolyzes dGTP over the other canonical NTPs. The chain is Deoxyguanosinetriphosphate triphosphohydrolase from Shigella flexneri.